The primary structure comprises 396 residues: Bifunctional enzyme Fae/Hps (396 aa).

The segment at 1–161 (MYQIGEALIG…YEKDRGVHAI (161 aa)) is formaldehyde-activating enzyme. The Proton donor role is filled by His17. Substrate is bound by residues Asp19, Leu48, Lys66, Thr68, and Gln83. Residues 162–396 (MGYKITRLWD…IDQYRIMTDF (235 aa)) form a 3-hexulose-6-phosphate synthase region.

The protein in the N-terminal section; belongs to the formaldehyde-activating enzyme family. It in the C-terminal section; belongs to the HPS/KGPDC family. HPS subfamily.

The catalysed reaction is 5,6,7,8-tetrahydromethanopterin + formaldehyde = 5,10-methylenetetrahydromethanopterin + H2O. The enzyme catalyses D-ribulose 5-phosphate + formaldehyde = D-arabino-hex-3-ulose 6-phosphate. It participates in carbohydrate biosynthesis; D-ribose 5-phosphate biosynthesis. Catalyzes the condensation of formaldehyde with tetrahydromethanopterin (H(4)MPT) to 5,10-methylenetetrahydromethanopterin. Its function is as follows. Catalyzes the reversible formation of ribulose-5-phosphate and formaldehyde from 3-hexulose-6-phosphate. This chain is Bifunctional enzyme Fae/Hps, found in Methanocella arvoryzae (strain DSM 22066 / NBRC 105507 / MRE50).